A 1083-amino-acid chain; its full sequence is Solute carrier family 12 member 7 (1083 aa).

The segment at 1 to 52 (MPTNFTVVPVEAHADGGGDETAERTEAPGTPEGPEPERPSPGDGNPRENSPF) is disordered. The Cytoplasmic portion of the chain corresponds to 1–119 (MPTNFTVVPV…RREAKAPRMG (119 aa)). Residues 12–26 (AHADGGGDETAERTE) show a composition bias toward basic and acidic residues. At Thr30 the chain carries Phosphothreonine. Ser50 and Ser62 each carry phosphoserine. Residues 120 to 142 (TFIGVYLPCLQNILGVILFLRLT) form a discontinuously helical membrane-spanning segment. Residues Asn131 and Ile132 each contribute to the K(+) site. Val135 contributes to the chloride binding site. Residues 143-149 (WIVGVAG) are Extracellular-facing. Residues 150–172 (VLESFLIVAMCCTCTMLTAISMS) form a helical membrane-spanning segment. Topologically, residues 173–196 (AIATNGVVPAGGSYYMISRSLGPE) are cytoplasmic. Residues 197 to 225 (FGGAVGLCFYLGTTFAGAMYILGTIEIFL) form a helical membrane-spanning segment. At 226–249 (TYISPGAAIFQAEAAGGEAAAMLH) the chain is on the extracellular side. 2 helical membrane-spanning segments follow: residues 250–270 (NMRV…FVGV) and 272–300 (YVNK…KSAF). Topologically, residues 301–419 (DPPDIPVCLL…PYVLTDIAAS (119 aa)) are extracellular. Intrachain disulfides connect Cys308–Cys323 and Cys343–Cys352. A glycan (N-linked (GlcNAc...) asparagine) is linked at Asn312. Residue Asn360 is glycosylated (N-linked (GlcNAc...) asparagine). A helical transmembrane segment spans residues 420-440 (FTLLVGIYFPSVTGIMAGSNR). K(+) contacts are provided by Pro429 and Thr432. Residue Pro429 participates in chloride binding. The chloride site is built by Gly433 and Ile434. At 441–450 (SGDLKDAQKS) the chain is on the cytoplasmic side. A helical membrane pass occupies residues 451 to 473 (IPTGTILAIVTTSFIYLSCIVLF). Residues 474–504 (GACIEGVVLRDKFGEALQGNLVIGMLAWPSP) are Extracellular-facing. Residues 505–531 (WVIVIGSFFSTCGAGLQSLTGAPRLLQ) form a helical membrane-spanning segment. Residues 532–554 (AIARDGIVPFLQVFGHGKANGEP) lie on the Cytoplasmic side of the membrane. 2 consecutive transmembrane segments (helical) span residues 555-571 (TWAL…GILI) and 574-598 (LDSV…ACAV). Tyr589 contacts chloride. The Cytoplasmic portion of the chain corresponds to 599–612 (QTLLRTPNWRPRFK). A run of 2 helical transmembrane segments spans residues 613–632 (FYHW…LMFI) and 636–651 (YYAL…IYKY). The Cytoplasmic segment spans residues 652–1083 (IEYRGAEKEW…GGREVITIYS (432 aa)). Residues 664-680 (GIRGLSLNAARYALLRV) are scissor helix. 2 positions are modified to phosphothreonine: Thr973 and Thr980.

Belongs to the SLC12A transporter family. K/Cl co-transporter subfamily. As to quaternary structure, homodimer; adopts a domain-swap conformation at the scissor helices connecting the transmembrane domain and C-terminal domain. Heterodimer with K-Cl cotransporter SLC12A5. As to expression, detected in muscle, brain, lung, heart and kidney.

It localises to the cell membrane. It carries out the reaction K(+)(in) + chloride(in) = K(+)(out) + chloride(out). With respect to regulation, activated by N-ethylmaleimide (NEM). Inhibited by furosemide, DIDS and bumetanide. The inhibition is much stronger in the presence of 50 mM K(+) in the uptake medium. Inhibited by DIOA. Inhibited by WNK3. Its function is as follows. Mediates electroneutral potassium-chloride cotransport when activated by cell swelling. May mediate K(+) uptake into Deiters' cells in the cochlea and contribute to K(+) recycling in the inner ear. Important for the survival of cochlear outer and inner hair cells and the maintenance of the organ of Corti. May be required for basolateral Cl(-) extrusion in the kidney and contribute to renal acidification. This Homo sapiens (Human) protein is Solute carrier family 12 member 7.